The sequence spans 444 residues: ATP-dependent protease ATPase subunit HslU (444 aa).

Residues Ile18 and 60-65 (GVGKTE) contribute to the ATP site. Residues 141–161 (DAWGNNEEGNNDSGTRQSFRK) form a disordered region. Polar residues predominate over residues 147-157 (EEGNNDSGTRQ). Residues Asp257, Glu322, and Arg394 each coordinate ATP.

The protein belongs to the ClpX chaperone family. HslU subfamily. As to quaternary structure, a double ring-shaped homohexamer of HslV is capped on each side by a ring-shaped HslU homohexamer. The assembly of the HslU/HslV complex is dependent on binding of ATP.

Its subcellular location is the cytoplasm. ATPase subunit of a proteasome-like degradation complex; this subunit has chaperone activity. The binding of ATP and its subsequent hydrolysis by HslU are essential for unfolding of protein substrates subsequently hydrolyzed by HslV. HslU recognizes the N-terminal part of its protein substrates and unfolds these before they are guided to HslV for hydrolysis. This chain is ATP-dependent protease ATPase subunit HslU, found in Aliivibrio fischeri (strain ATCC 700601 / ES114) (Vibrio fischeri).